Consider the following 579-residue polypeptide: Arginine--tRNA ligase (579 aa).

The short motif at 127–137 (PNLAKEMHVGH) is the 'HIGH' region element.

This sequence belongs to the class-I aminoacyl-tRNA synthetase family. As to quaternary structure, monomer.

It localises to the cytoplasm. It carries out the reaction tRNA(Arg) + L-arginine + ATP = L-arginyl-tRNA(Arg) + AMP + diphosphate. The sequence is that of Arginine--tRNA ligase from Ectopseudomonas mendocina (strain ymp) (Pseudomonas mendocina).